The sequence spans 108 residues: uncharacterized protein (108 aa).

The next 3 membrane-spanning stretches (helical) occupy residues 24 to 44 (LWIT…GGLL), 55 to 75 (AHMA…YLAM), and 88 to 108 (RFEI…SIGI).

The protein to cation A.eutrophus efflux system protein CzcD.

Its subcellular location is the cell membrane. This is an uncharacterized protein from Geobacillus stearothermophilus (Bacillus stearothermophilus).